Here is a 307-residue protein sequence, read N- to C-terminus: N-acetylglucosamine-1-phosphotransferase subunit gamma (307 aa).

An N-terminal signal peptide occupies residues 1–24; that stretch reads MAGRLAGFLMLLGLASQGPAPAYA. The MRH domain occupies 69–171; that stretch reads GKCFSLVEST…TFETPLVCHP (103 aa). A disulfide bridge links Cys-71 with Cys-84. N-linked (GlcNAc...) asparagine glycans are attached at residues Asn-88 and Asn-115. Intrachain disulfides connect Cys-129/Cys-157 and Cys-142/Cys-169. In terms of domain architecture, DMAP1-binding spans 176–279; sequence VYPTLSEALQ…HTQPTETTHS (104 aa).

As to quaternary structure, homodimer; disulfide-linked. Hexamer of two alpha (GNPTAB), two beta (GNPTAB) and two gamma (GNPTG) subunits; disulfide-linked. The alpha and/or the beta subunits of the enzyme constitute the catalytic subunits. Cys-245 mediates the formation of the interchain disulfide bond for formation of the homodimer. Cys-142, Cys-157 and Cys-169 are involved in intramolecular disulfide bonds formation. As to expression, widely expressed. Highly expressed in the liver, intestine, brain, thymus, testis and ovary.

The protein localises to the secreted. The protein resides in the golgi apparatus. Its function is as follows. Non-catalytic subunit of the N-acetylglucosamine-1-phosphotransferase complex, an enzyme that catalyzes the formation of mannose 6-phosphate (M6P) markers on high mannose type oligosaccharides in the Golgi apparatus. Binds and presents the high mannose glycans of the acceptor to the catalytic alpha and beta subunits (GNPTAB). Enhances the rate of N-acetylglucosamine-1-phosphate transfer to the oligosaccharides of acid hydrolase acceptors. In Mus musculus (Mouse), this protein is N-acetylglucosamine-1-phosphotransferase subunit gamma (Gnptg).